Reading from the N-terminus, the 389-residue chain is Chalcone synthase 1 (389 aa).

Cys-164 is an active-site residue.

Belongs to the thiolase-like superfamily. Chalcone/stilbene synthases family.

It catalyses the reaction (E)-4-coumaroyl-CoA + 3 malonyl-CoA + 3 H(+) = 2',4,4',6'-tetrahydroxychalcone + 3 CO2 + 4 CoA. It functions in the pathway secondary metabolite biosynthesis; flavonoid biosynthesis. The primary product of this enzyme is 4,2',4',6'-tetrahydroxychalcone (also termed naringenin-chalcone or chalcone) which can under specific conditions spontaneously isomerize into naringenin. The protein is Chalcone synthase 1 (CHS1) of Cicer arietinum (Chickpea).